Here is a 471-residue protein sequence, read N- to C-terminus: V-type ATP synthase beta chain (471 aa).

The protein belongs to the ATPase alpha/beta chains family.

In terms of biological role, produces ATP from ADP in the presence of a proton gradient across the membrane. The V-type beta chain is a regulatory subunit. The polypeptide is V-type ATP synthase beta chain (Streptococcus pyogenes serotype M28 (strain MGAS6180)).